A 204-amino-acid polypeptide reads, in one-letter code: uncharacterized protein (204 aa).

Its function is as follows. Possibly involved in pGI2 replication mechanism. This is an uncharacterized protein from Bacillus thuringiensis.